Here is a 355-residue protein sequence, read N- to C-terminus: Putative beta-lactamase HcpE (355 aa).

An N-terminal signal peptide occupies residues 1 to 22; it reads MNIKILKILVGGLFFLSLNAHL. TPR repeat units lie at residues 27–60, 63–96, 98–131, 132–166, 202–240, 245–275, 276–311, and 312–344; these read DNSFLGIGERAYKSGNYSKAASYFKKACNDGVSE, TQLGIIYENGQGTRIDYKKALEYYKTACQADDRE, CFGLGGLYDEGLGTAQNYQEAIDAYAKACVLKHP, ESCYNLGIIYDRKIKGNAAQAVTYYQKSCNFDMAK, GQACRALGSLFENGDAGLDEDFEVAFDYLQKACALNNSG, LGSMYMLGRYVKKDPQKAFNYFKQACDMGSA, VSCSRMGFMYSQGDTVSKDLRKALDNYERGCDMGDE, and VGCFALAGMYYNMKDKENAIMIYDKGCKLGMKQ. 9 disulfides stabilise this stretch: cysteine 54–cysteine 62, cysteine 90–cysteine 98, cysteine 126–cysteine 134, cysteine 160–cysteine 168, cysteine 197–cysteine 205, cysteine 234–cysteine 242, cysteine 270–cysteine 278, cysteine 306–cysteine 314, and cysteine 338–cysteine 346.

This sequence belongs to the hcp beta-lactamase family.

The protein resides in the secreted. The enzyme catalyses a beta-lactam + H2O = a substituted beta-amino acid. May hydrolyze 6-aminopenicillinic acid and 7-aminocephalosporanic acid (ACA) derivatives. The protein is Putative beta-lactamase HcpE (hcpE) of Helicobacter pylori (strain J99 / ATCC 700824) (Campylobacter pylori J99).